The primary structure comprises 417 residues: Carboxypeptidase B (417 aa).

The first 15 residues, 1–15, serve as a signal peptide directing secretion; it reads MLALLVLVTVALASA. Residues 16-110 constitute a propeptide, activation peptide; that stretch reads HHGGEHFEGE…VEAQFDSRVR (95 aa). The 295-residue stretch at 118 to 412 folds into the Peptidase M14 domain; sequence KYNKWETIEA…LAIKYVASYV (295 aa). C173 and C186 are disulfide-bonded. Zn(2+) is bound by residues H176 and E179. Substrate contacts are provided by residues 176–179, R234, and 251–252; these read HARE and NR. 2 cysteine pairs are disulfide-bonded: C245-C268 and C259-C273. A Zn(2+)-binding site is contributed by H304. Residues 305–306 and Y356 each bind substrate; that span reads SY. E378 (proton donor/acceptor) is an active-site residue.

This sequence belongs to the peptidase M14 family. Requires Zn(2+) as cofactor. In terms of tissue distribution, pancreas.

It localises to the secreted. It is found in the zymogen granule lumen. The enzyme catalyses Preferential release of a C-terminal lysine or arginine amino acid.. The protein is Carboxypeptidase B (CPB1) of Homo sapiens (Human).